A 560-amino-acid polypeptide reads, in one-letter code: Bifunctional NAD(P)H-hydrate repair enzyme (560 aa).

Residues 1-241 form an NAD(P)H-hydrate epimerase region; the sequence is MLSRLSERCT…WMTAPERMRV (241 aa). Positions 29–235 constitute a YjeF N-terminal domain; that stretch reads LRDAEPAAAA…SLGLEDWMTA (207 aa). The interval 77-81 is NADPHX 1; for epimerase activity; sequence NNGGD. Asn-78 and Asp-145 together coordinate K(+). The tract at residues 149-155 is NADPHX 1; for epimerase activity; sequence GTGICGP. (6S)-NADPHX is bound by residues Tyr-160 and Asp-178. Ser-181 is a binding site for K(+). In terms of domain architecture, YjeF C-terminal spans 249 to 547; sequence LDDVYEYFGI…HRVPLIVNAS (299 aa). An ADP-dependent (S)-NAD(P)H-hydrate dehydratase region spans residues 249–560; it reads LDDVYEYFGI…PASRQRPSGQ (312 aa). Gly-351 is a binding site for (6S)-NADPHX. The NADPHX 2; for dehydratase activity stretch occupies residues 417–423; sequence HPGEAAR. ADP-binding positions include 454–458 and 475–484; these read KGPGT and NAGMASGGMG. Asp-485 is a (6S)-NADPHX binding site.

The protein in the N-terminal section; belongs to the NnrE/AIBP family. In the C-terminal section; belongs to the NnrD/CARKD family. K(+) serves as cofactor.

The enzyme catalyses (6S)-NADHX + ADP = AMP + phosphate + NADH + H(+). It carries out the reaction (6S)-NADPHX + ADP = AMP + phosphate + NADPH + H(+). The catalysed reaction is (6R)-NADHX = (6S)-NADHX. It catalyses the reaction (6R)-NADPHX = (6S)-NADPHX. In terms of biological role, bifunctional enzyme that catalyzes the epimerization of the S- and R-forms of NAD(P)HX and the dehydration of the S-form of NAD(P)HX at the expense of ADP, which is converted to AMP. This allows the repair of both epimers of NAD(P)HX, a damaged form of NAD(P)H that is a result of enzymatic or heat-dependent hydration. This Leishmania major protein is Bifunctional NAD(P)H-hydrate repair enzyme.